The sequence spans 64 residues: Large ribosomal subunit protein bL35 (64 aa).

The protein belongs to the bacterial ribosomal protein bL35 family.

This is Large ribosomal subunit protein bL35 from Pseudomonas putida (strain W619).